The sequence spans 345 residues: DNA primase small subunit PriS (345 aa).

Catalysis depends on residues Asp95 and Asp97. The Zn(2+) site is built by Cys106, His108, Cys114, and Cys117. The Zinc knuckle motif motif lies at 106–117 (CNHEPGKVCPIC). Residue Asp280 is part of the active site.

This sequence belongs to the eukaryotic-type primase small subunit family. As to quaternary structure, heterodimer of a small subunit (PriS) and a large subunit (PriL). The cofactor is Mg(2+). Mn(2+) serves as cofactor.

Its function is as follows. Catalytic subunit of DNA primase, an RNA polymerase that catalyzes the synthesis of short RNA molecules used as primers for DNA polymerase during DNA replication. The small subunit contains the primase catalytic core and has DNA synthesis activity on its own, synthesizing DNA strands up to 3 kB. Binding to the large subunit stabilizes and modulates the activity, increasing the rate of DNA synthesis while decreasing the length of the DNA fragments, and conferring RNA synthesis capability for RNA fragments up to 150 bases. The DNA polymerase activity may enable DNA primase to also catalyze primer extension after primer synthesis. May also play a role in DNA repair. Displays gap-filling and strand-displacement activities. This Pyrococcus abyssi (strain GE5 / Orsay) protein is DNA primase small subunit PriS.